Consider the following 95-residue polypeptide: Protein TusB (95 aa).

It belongs to the DsrH/TusB family. Heterohexamer, formed by a dimer of trimers. The hexameric TusBCD complex contains 2 copies each of TusB, TusC and TusD. The TusBCD complex interacts with TusE.

The protein localises to the cytoplasm. Its function is as follows. Part of a sulfur-relay system required for 2-thiolation of 5-methylaminomethyl-2-thiouridine (mnm(5)s(2)U) at tRNA wobble positions. This Escherichia coli (strain ATCC 8739 / DSM 1576 / NBRC 3972 / NCIMB 8545 / WDCM 00012 / Crooks) protein is Protein TusB.